The sequence spans 284 residues: Protoheme IX farnesyltransferase (284 aa).

Transmembrane regions (helical) follow at residues 13–33, 35–55, 84–104, 106–126, 134–154, 163–183, 205–225, 229–249, and 264–284; these read VTVL…TGYP, LTVI…SFIL, FALL…TYFI, LLTA…YTIW, NIVI…AAMA, VMFL…AIFL, VNQI…FYFV, MGYL…GFAY, and FFFS…DSKI.

This sequence belongs to the UbiA prenyltransferase family. Protoheme IX farnesyltransferase subfamily.

The protein localises to the cell inner membrane. The catalysed reaction is heme b + (2E,6E)-farnesyl diphosphate + H2O = Fe(II)-heme o + diphosphate. The protein operates within porphyrin-containing compound metabolism; heme O biosynthesis; heme O from protoheme: step 1/1. Its function is as follows. Converts heme B (protoheme IX) to heme O by substitution of the vinyl group on carbon 2 of heme B porphyrin ring with a hydroxyethyl farnesyl side group. In Leptospira biflexa serovar Patoc (strain Patoc 1 / Ames), this protein is Protoheme IX farnesyltransferase.